Consider the following 166-residue polypeptide: Protein-export protein SecB (166 aa).

It belongs to the SecB family. As to quaternary structure, homotetramer, a dimer of dimers. One homotetramer interacts with 1 SecA dimer.

It is found in the cytoplasm. Its function is as follows. One of the proteins required for the normal export of preproteins out of the cell cytoplasm. It is a molecular chaperone that binds to a subset of precursor proteins, maintaining them in a translocation-competent state. It also specifically binds to its receptor SecA. This is Protein-export protein SecB from Actinobacillus pleuropneumoniae serotype 7 (strain AP76).